The primary structure comprises 1086 residues: Fused isobutyryl-CoA mutase (1086 aa).

Residues 10–140 (HVRFVTASSL…QGMINVMLEE (131 aa)) form the B12-binding domain. Residue His23 participates in adenosylcob(III)alamin binding. Positions 153–407 (LERLPSGDVQ…FVALVDTINK (255 aa)) are GTPase chaperone MeaI. GTP is bound at residue 210–215 (GAGKSS). Mg(2+) is bound by residues Ser214, Val238, Asp239, and Asp252. Residue Arg255 participates in GTP binding. 2 residues coordinate Mg(2+): Glu300 and Thr301. 347-350 (NKFE) contacts GTP. Residues 408-570 (KAGTNWKTSL…YKENVPGSFP (163 aa)) form a linker region. Substrate-binding residues include Phe578, Arg613, Arg719, Tyr763, Ser812, Arg847, and Lys852. GTP-binding residues include Glu964 and Asn1085.

The protein belongs to the IcmF family. In terms of assembly, homodimer. The cofactor is adenosylcob(III)alamin. Mg(2+) serves as cofactor.

It catalyses the reaction 2-methylpropanoyl-CoA = butanoyl-CoA. It carries out the reaction 3-methylbutanoyl-CoA = 2,2-dimethylpropanoyl-CoA. The catalysed reaction is GTP + H2O = GDP + phosphate + H(+). Catalyzes the reversible interconversion of isobutyryl-CoA and n-butyryl-CoA, and to a lesser extent, of pivalyl-CoA and isovaleryl-CoA, using radical chemistry. Also exhibits GTPase activity, associated with its G-protein domain (MeaI) that functions as a chaperone that assists cofactor delivery and proper holo-enzyme assembly. Also displays ATPase activity. Is not able to convert 3-hydroxybutyryl-CoA to 2-hydroxyisobutyryl-CoA. Does not exhibit methylmalonyl-CoA mutase (MCM) activity. This is Fused isobutyryl-CoA mutase from Geobacillus kaustophilus (strain HTA426).